The following is a 144-amino-acid chain: Superoxide dismutase [Mn], mitochondrial (144 aa).

Residues H10, H58, and D143 each coordinate Mn(2+).

The protein belongs to the iron/manganese superoxide dismutase family. In terms of assembly, homotetramer. Requires Mn(2+) as cofactor.

The protein localises to the mitochondrion matrix. It carries out the reaction 2 superoxide + 2 H(+) = H2O2 + O2. Destroys superoxide anion radicals which are normally produced within the cells and which are toxic to biological systems. The chain is Superoxide dismutase [Mn], mitochondrial from Eptatretus stoutii (Pacific hagfish).